The following is a 476-amino-acid chain: Bifunctional protein HldE (476 aa).

The tract at residues 1 to 318 (MKPTLPNYDQ…AEAIHGSQDS (318 aa)) is ribokinase. 195–198 (NMLE) is a binding site for ATP. Residue Asp-264 is part of the active site. A cytidylyltransferase region spans residues 344-476 (MTNGCFDILH…IIEAIKGGRG (133 aa)).

In the N-terminal section; belongs to the carbohydrate kinase PfkB family. This sequence in the C-terminal section; belongs to the cytidylyltransferase family. As to quaternary structure, homodimer.

It catalyses the reaction D-glycero-beta-D-manno-heptose 7-phosphate + ATP = D-glycero-beta-D-manno-heptose 1,7-bisphosphate + ADP + H(+). The enzyme catalyses D-glycero-beta-D-manno-heptose 1-phosphate + ATP + H(+) = ADP-D-glycero-beta-D-manno-heptose + diphosphate. It functions in the pathway nucleotide-sugar biosynthesis; ADP-L-glycero-beta-D-manno-heptose biosynthesis; ADP-L-glycero-beta-D-manno-heptose from D-glycero-beta-D-manno-heptose 7-phosphate: step 1/4. Its pathway is nucleotide-sugar biosynthesis; ADP-L-glycero-beta-D-manno-heptose biosynthesis; ADP-L-glycero-beta-D-manno-heptose from D-glycero-beta-D-manno-heptose 7-phosphate: step 3/4. In terms of biological role, catalyzes the phosphorylation of D-glycero-D-manno-heptose 7-phosphate at the C-1 position to selectively form D-glycero-beta-D-manno-heptose-1,7-bisphosphate. Its function is as follows. Catalyzes the ADP transfer from ATP to D-glycero-beta-D-manno-heptose 1-phosphate, yielding ADP-D-glycero-beta-D-manno-heptose. This Aliivibrio salmonicida (strain LFI1238) (Vibrio salmonicida (strain LFI1238)) protein is Bifunctional protein HldE.